Reading from the N-terminus, the 341-residue chain is tRNA N6-adenosine threonylcarbamoyltransferase (341 aa).

Fe cation contacts are provided by histidine 111 and histidine 115. Residues 134–138, aspartate 167, glycine 180, and asparagine 276 each bind substrate; that span reads LVSGG. Aspartate 304 contacts Fe cation.

It belongs to the KAE1 / TsaD family. Fe(2+) is required as a cofactor.

It localises to the cytoplasm. The enzyme catalyses L-threonylcarbamoyladenylate + adenosine(37) in tRNA = N(6)-L-threonylcarbamoyladenosine(37) in tRNA + AMP + H(+). Functionally, required for the formation of a threonylcarbamoyl group on adenosine at position 37 (t(6)A37) in tRNAs that read codons beginning with adenine. Is involved in the transfer of the threonylcarbamoyl moiety of threonylcarbamoyl-AMP (TC-AMP) to the N6 group of A37, together with TsaE and TsaB. TsaD likely plays a direct catalytic role in this reaction. This is tRNA N6-adenosine threonylcarbamoyltransferase from Pseudomonas aeruginosa (strain ATCC 15692 / DSM 22644 / CIP 104116 / JCM 14847 / LMG 12228 / 1C / PRS 101 / PAO1).